Here is a 413-residue protein sequence, read N- to C-terminus: L-cysteine:1D-myo-inositol 2-amino-2-deoxy-alpha-D-glucopyranoside ligase (413 aa).

A Zn(2+)-binding site is contributed by C15. Residues 15–18 (CGIT), T30, and 53–55 (NVT) contribute to the L-cysteinyl-5'-AMP site. The 'HIGH' region signature appears at 17–27 (ITPYDATHLGH). The short motif at 155-160 (ERGGDP) is the 'ERGGDP' region element. Position 195 (W195) interacts with L-cysteinyl-5'-AMP. Position 199 (C199) interacts with Zn(2+). L-cysteinyl-5'-AMP is bound at residue 217–219 (GTD). Residue H224 coordinates Zn(2+). Residue V251 coordinates L-cysteinyl-5'-AMP. The short motif at 257 to 261 (KMSKS) is the 'KMSKS' region element.

The protein belongs to the class-I aminoacyl-tRNA synthetase family. MshC subfamily. In terms of assembly, monomer. The cofactor is Zn(2+).

The catalysed reaction is 1D-myo-inositol 2-amino-2-deoxy-alpha-D-glucopyranoside + L-cysteine + ATP = 1D-myo-inositol 2-(L-cysteinylamino)-2-deoxy-alpha-D-glucopyranoside + AMP + diphosphate + H(+). In terms of biological role, catalyzes the ATP-dependent condensation of GlcN-Ins and L-cysteine to form L-Cys-GlcN-Ins. The polypeptide is L-cysteine:1D-myo-inositol 2-amino-2-deoxy-alpha-D-glucopyranoside ligase (Frankia alni (strain DSM 45986 / CECT 9034 / ACN14a)).